The chain runs to 129 residues: Glycine cleavage system H protein (129 aa).

Residues 24 to 106 enclose the Lipoyl-binding domain; that stretch reads LIRVGISAFA…HGAGWLLVVR (83 aa). Position 65 is an N6-lipoyllysine (Lys-65).

This sequence belongs to the GcvH family. In terms of assembly, the glycine cleavage system is composed of four proteins: P, T, L and H. It depends on (R)-lipoate as a cofactor.

The glycine cleavage system catalyzes the degradation of glycine. The H protein shuttles the methylamine group of glycine from the P protein to the T protein. The sequence is that of Glycine cleavage system H protein from Synechococcus sp. (strain CC9902).